Reading from the N-terminus, the 450-residue chain is Phosphoglucosamine mutase (450 aa).

Residue serine 102 is the Phosphoserine intermediate of the active site. Mg(2+) contacts are provided by serine 102, aspartate 244, aspartate 246, and aspartate 248. The residue at position 102 (serine 102) is a Phosphoserine.

It belongs to the phosphohexose mutase family. Mg(2+) serves as cofactor. Activated by phosphorylation.

It carries out the reaction alpha-D-glucosamine 1-phosphate = D-glucosamine 6-phosphate. Catalyzes the conversion of glucosamine-6-phosphate to glucosamine-1-phosphate. This is Phosphoglucosamine mutase from Desulfovibrio desulfuricans (strain ATCC 27774 / DSM 6949 / MB).